Reading from the N-terminus, the 205-residue chain is MAIKIGITGGIGSGKSVVSHLLEVMGVPVYISDEESKKVVATDPVIRKELCDLVGEEVFSGGKLNKTLLATYLFASSTHASQVNGIIHPRVKEHFRQWSSHKECLDIIGMESAILIESGFADEVDCIVMVYAPLELRVERAVRRDNASCEQIMQRIRSQMSDEEKCERASFVIINDGEKPLIPQILELIAFLYQKIHYLCSAKNN.

Residues 4–203 enclose the DPCK domain; sequence KIGITGGIGS…QKIHYLCSAK (200 aa). Residue 12 to 17 coordinates ATP; it reads GSGKSV.

Belongs to the CoaE family.

The protein localises to the cytoplasm. It catalyses the reaction 3'-dephospho-CoA + ATP = ADP + CoA + H(+). It participates in cofactor biosynthesis; coenzyme A biosynthesis; CoA from (R)-pantothenate: step 5/5. Its function is as follows. Catalyzes the phosphorylation of the 3'-hydroxyl group of dephosphocoenzyme A to form coenzyme A. This Bacteroides fragilis (strain YCH46) protein is Dephospho-CoA kinase.